A 620-amino-acid chain; its full sequence is Protein phosphatase 2C-like domain-containing protein 1 (620 aa).

The PPM-type phosphatase domain maps to 173-611 (GIAICSNNNS…DSITVMVMFL (439 aa)).

The protein belongs to the PP2C family.

The polypeptide is Protein phosphatase 2C-like domain-containing protein 1 (Pp2d1) (Mus musculus (Mouse)).